The sequence spans 173 residues: Crossover junction endodeoxyribonuclease RuvC (173 aa).

Residues aspartate 8, glutamate 69, and aspartate 141 contribute to the active site. 3 residues coordinate Mg(2+): aspartate 8, glutamate 69, and aspartate 141.

This sequence belongs to the RuvC family. As to quaternary structure, homodimer which binds Holliday junction (HJ) DNA. The HJ becomes 2-fold symmetrical on binding to RuvC with unstacked arms; it has a different conformation from HJ DNA in complex with RuvA. In the full resolvosome a probable DNA-RuvA(4)-RuvB(12)-RuvC(2) complex forms which resolves the HJ. The cofactor is Mg(2+).

The protein resides in the cytoplasm. It catalyses the reaction Endonucleolytic cleavage at a junction such as a reciprocal single-stranded crossover between two homologous DNA duplexes (Holliday junction).. Its function is as follows. The RuvA-RuvB-RuvC complex processes Holliday junction (HJ) DNA during genetic recombination and DNA repair. Endonuclease that resolves HJ intermediates. Cleaves cruciform DNA by making single-stranded nicks across the HJ at symmetrical positions within the homologous arms, yielding a 5'-phosphate and a 3'-hydroxyl group; requires a central core of homology in the junction. The consensus cleavage sequence is 5'-(A/T)TT(C/G)-3'. Cleavage occurs on the 3'-side of the TT dinucleotide at the point of strand exchange. HJ branch migration catalyzed by RuvA-RuvB allows RuvC to scan DNA until it finds its consensus sequence, where it cleaves and resolves the cruciform DNA. The polypeptide is Crossover junction endodeoxyribonuclease RuvC (Stenotrophomonas maltophilia (strain R551-3)).